Reading from the N-terminus, the 208-residue chain is Density-regulated protein (208 aa).

The span at 1 to 12 (MATTENAESGSP) shows a compositional bias: polar residues. 2 disordered regions span residues 1 to 20 (MATTENAESGSPENKVDRAD) and 69 to 120 (GTAP…KKKT). Residue serine 9 is modified to Phosphoserine. The span at 77-89 (KGGGGGEDGGGGR) shows a compositional bias: gly residues. Residues 105–120 (KQKRGGRGQIKQKKKT) show a composition bias toward basic residues. One can recognise an SUI1 domain in the interval 125–192 (VTIAKIPRAK…DIIDVIQEKW (68 aa)).

The protein belongs to the DENR family.

In terms of biological role, may be involved in the translation of target mRNAs by scanning and recognition of the initiation codon. Involved in translation initiation; promotes recruitment of aminoacetyled initiator tRNA to P site of 40S ribosomes. Can promote release of deacylated tRNA and mRNA from recycled 40S subunits following ABCE1-mediated dissociation of post-termination ribosomal complexes into subunits. In Danio rerio (Zebrafish), this protein is Density-regulated protein (denr).